The primary structure comprises 172 residues: Cell division protein SepF (172 aa).

A disordered region spans residues aspartate 16–serine 78. Residues glycine 17–glutamate 48 are compositionally biased toward basic and acidic residues.

The protein belongs to the SepF family. Homodimer. Interacts with FtsZ.

It localises to the cytoplasm. Its function is as follows. Cell division protein that is part of the divisome complex and is recruited early to the Z-ring. Probably stimulates Z-ring formation, perhaps through the cross-linking of FtsZ protofilaments. Its function overlaps with FtsA. The sequence is that of Cell division protein SepF from Renibacterium salmoninarum (strain ATCC 33209 / DSM 20767 / JCM 11484 / NBRC 15589 / NCIMB 2235).